Consider the following 438-residue polypeptide: Adenosylhomocysteinase (438 aa).

Threonine 61, aspartate 137, and glutamate 162 together coordinate substrate. 163-165 serves as a coordination point for NAD(+); it reads TTT. Residues lysine 192 and aspartate 196 each contribute to the substrate site. Residues asparagine 197, 226-231, glutamate 249, asparagine 284, 305-307, and asparagine 352 contribute to the NAD(+) site; these read GYGDVG and IGH.

Belongs to the adenosylhomocysteinase family. NAD(+) is required as a cofactor.

The protein resides in the cytoplasm. The enzyme catalyses S-adenosyl-L-homocysteine + H2O = L-homocysteine + adenosine. Its pathway is amino-acid biosynthesis; L-homocysteine biosynthesis; L-homocysteine from S-adenosyl-L-homocysteine: step 1/1. Functionally, may play a key role in the regulation of the intracellular concentration of adenosylhomocysteine. This chain is Adenosylhomocysteinase, found in Christiangramia forsetii (strain DSM 17595 / CGMCC 1.15422 / KT0803) (Gramella forsetii).